We begin with the raw amino-acid sequence, 271 residues long: Neurexophilin-1 (271 aa).

Residues 1–21 form the signal peptide; the sequence is MQAACWYVLLLLQPTVYLVTC. The tract at residues 22–97 is II; that stretch reads ANLTNGGKSE…WDWLRNSTDL (76 aa). N-linked (GlcNAc...) asparagine glycosylation is found at N23, N68, N93, N146, N156, and N162. The III stretch occupies residues 98 to 176; the sequence is QEPRPRAKRR…LVPPTKIVEF (79 aa). Residues 177 to 185 form an IV (linker domain) region; that stretch reads DLAQQTVID. Positions 186 to 271 are v (Cys-rich); the sequence is AKDSKSFNCR…HSDTPYFPSG (86 aa).

This sequence belongs to the neurexophilin family. May be proteolytically processed at the boundary between the N-terminal non-conserved and the central conserved domain in neuron-like cells. In terms of tissue distribution, brain, only in a scattered subpopulation of neurons that probably represent inhibitory interneurons.

It is found in the secreted. May be signaling molecules that resemble neuropeptides. Ligand for alpha-neurexins. This Mus musculus (Mouse) protein is Neurexophilin-1 (Nxph1).